A 131-amino-acid polypeptide reads, in one-letter code: Large ribosomal subunit protein bL17 (131 aa).

Belongs to the bacterial ribosomal protein bL17 family. In terms of assembly, part of the 50S ribosomal subunit. Contacts protein L32.

The protein is Large ribosomal subunit protein bL17 of Nitrosospira multiformis (strain ATCC 25196 / NCIMB 11849 / C 71).